The primary structure comprises 39 residues: uncharacterized protein (39 aa).

The first 21 residues, 1 to 21 (MHLRSRWWLALLYCKDPVSRS), serve as a signal peptide directing secretion.

This is an uncharacterized protein from Saccharomyces cerevisiae (strain ATCC 204508 / S288c) (Baker's yeast).